A 437-amino-acid polypeptide reads, in one-letter code: GTPase Era, mitochondrial (437 aa).

Residues 1-20 (MAAPRRYCAGLVRALLGARQ) constitute a mitochondrion transit peptide. One can recognise an Era-type G domain in the interval 112-330 (RVLRVVLLGA…QYLLTQAQPG (219 aa)). Positions 120 to 127 (GAPNAGKS) are G1. Position 120 to 127 (120 to 127 (GAPNAGKS)) interacts with GTP. A G2 region spans residues 146–150 (HTTRC). Residues 167–170 (DTPG) form a G3 region. A GTP-binding site is contributed by 167–171 (DTPGI). At Ser-173 the chain carries Phosphoserine. 236 to 239 (NKVD) serves as a coordination point for GTP. A G4 region spans residues 236-239 (NKVD). The interval 270–292 (LRSRSSTHCPGPETEGPNAHSVR) is disordered. The G5 stretch occupies residues 308–310 (LSA). A KH type-2 domain is found at 360–437 (LPEEVPYGVQ…LIRLSVKLLK (78 aa)).

This sequence belongs to the TRAFAC class TrmE-Era-EngA-EngB-Septin-like GTPase superfamily. Era GTPase family.

The protein localises to the mitochondrion matrix. Its subcellular location is the mitochondrion inner membrane. Probable GTPase that plays a role in the mitochondrial ribosomal small subunit assembly. Specifically binds the 12S mitochondrial rRNA (12S mt-rRNA) to a 33 nucleotide section delineating the 3' terminal stem-loop region. May act as a chaperone that protects the 12S mt-rRNA on the 28S mitoribosomal subunit during ribosomal small subunit assembly. The polypeptide is GTPase Era, mitochondrial (Eral1) (Mus musculus (Mouse)).